Consider the following 310-residue polypeptide: Syntaxin-81 (310 aa).

At 1-289 the chain is on the cytoplasmic side; that stretch reads MSRFRDRTED…QAIQRNSSSR (289 aa). A coiled-coil region spans residues 77-114; that stretch reads RTTEQEKDSIEQEVAAFIKACKEQIDILINSIRNEEAN. The helical; Anchor for type IV membrane protein transmembrane segment at 290-310 threads the bilayer; sequence TFLLLFFFVLTFSVLFLDWYS.

It belongs to the syntaxin family. As to quaternary structure, part of the t-SNARE complex. Interacts with MAG2.

Its subcellular location is the membrane. Functionally, vesicle trafficking protein that functions in the secretory pathway. The sequence is that of Syntaxin-81 (SYP81) from Arabidopsis thaliana (Mouse-ear cress).